Here is a 258-residue protein sequence, read N- to C-terminus: Glutamate racemase (258 aa).

Substrate contacts are provided by residues 12-13 (DS) and 44-45 (YG). The active-site Proton donor/acceptor is Cys75. 76–77 (NT) contacts substrate. Cys186 serves as the catalytic Proton donor/acceptor. Substrate is bound at residue 187 to 188 (TH).

Belongs to the aspartate/glutamate racemases family.

The enzyme catalyses L-glutamate = D-glutamate. It functions in the pathway cell wall biogenesis; peptidoglycan biosynthesis. Its function is as follows. Provides the (R)-glutamate required for cell wall biosynthesis. This Clostridium botulinum (strain Alaska E43 / Type E3) protein is Glutamate racemase.